The following is a 166-amino-acid chain: Putative 4-hydroxy-4-methyl-2-oxoglutarate aldolase (166 aa).

Residues 74–77 (GDQI) and R96 contribute to the substrate site. D97 provides a ligand contact to a divalent metal cation.

It belongs to the class II aldolase/RraA-like family. In terms of assembly, homotrimer. A divalent metal cation is required as a cofactor.

The enzyme catalyses 4-hydroxy-4-methyl-2-oxoglutarate = 2 pyruvate. It carries out the reaction oxaloacetate + H(+) = pyruvate + CO2. Functionally, catalyzes the aldol cleavage of 4-hydroxy-4-methyl-2-oxoglutarate (HMG) into 2 molecules of pyruvate. Also contains a secondary oxaloacetate (OAA) decarboxylase activity due to the common pyruvate enolate transition state formed following C-C bond cleavage in the retro-aldol and decarboxylation reactions. The polypeptide is Putative 4-hydroxy-4-methyl-2-oxoglutarate aldolase (Xanthomonas campestris pv. campestris (strain B100)).